The sequence spans 297 residues: Putative lipid kinase MamU (297 aa).

In terms of domain architecture, DAGKc spans 43–131; sequence EGKDMGRMVR…MDVGRVNDRY (89 aa). 68-74 contacts ATP; it reads GDGSLSR. The active-site Proton acceptor is Glu-274.

Belongs to the diacylglycerol/lipid kinase family.

The protein localises to the cytoplasm. Its function is as follows. Might phosphorylate lipids. The protein is Putative lipid kinase MamU of Magnetospirillum gryphiswaldense (strain DSM 6361 / JCM 21280 / NBRC 15271 / MSR-1).